A 472-amino-acid chain; its full sequence is Type I restriction enzyme BthVORF4518P methylase subunit (472 aa).

S-adenosyl-L-methionine-binding positions include 151–156 (QYFTPR), 181–183 (TGG), Asp214, and 243–244 (DS).

The protein belongs to the N(4)/N(6)-methyltransferase family. The type I restriction/modification system is composed of three polypeptides R, M and S; the restriction enzyme has stoichiometry R(2)M(2)S(1) while the methyltransferase is M(2)S(1).

The enzyme catalyses a 2'-deoxyadenosine in DNA + S-adenosyl-L-methionine = an N(6)-methyl-2'-deoxyadenosine in DNA + S-adenosyl-L-homocysteine + H(+). Its function is as follows. The subtype gamma methyltransferase (M) subunit of a type I restriction enzyme. The M and S subunits together form a methyltransferase (MTase) that methylates two adenine residues of an undetermined sequence. In the presence of the R subunit the complex can also act as an endonuclease, binding to the same target sequence but cutting the DNA some distance from this site. Whether the DNA is cut or modified depends on the methylation state of the target sequence. When the target site is unmodified, the DNA is cut. When the target site is hemimethylated, the complex acts as a maintenance MTase modifying the DNA so that both strands become methylated. After locating a non-methylated recognition site, the enzyme complex serves as a molecular motor that translocates DNA in an ATP-dependent manner until a collision occurs that triggers cleavage. This Bacteroides thetaiotaomicron (strain ATCC 29148 / DSM 2079 / JCM 5827 / CCUG 10774 / NCTC 10582 / VPI-5482 / E50) protein is Type I restriction enzyme BthVORF4518P methylase subunit.